Here is a 144-residue protein sequence, read N- to C-terminus: Acidic phospholipase A2 (144 aa).

Positions methionine 1 to alanine 19 are cleaved as a signal peptide. Residues serine 20–leucine 27 constitute a propeptide that is removed on maturation. 7 disulfide bridges follow: cysteine 38/cysteine 98, cysteine 54/cysteine 143, cysteine 56/cysteine 72, cysteine 71/cysteine 125, cysteine 78/cysteine 118, cysteine 87/cysteine 111, and cysteine 105/cysteine 116. Ca(2+)-binding residues include tyrosine 55, glycine 57, and glycine 59. Residue histidine 75 is part of the active site. Aspartate 76 contacts Ca(2+). Aspartate 119 is an active-site residue.

The protein belongs to the phospholipase A2 family. Group I subfamily. D49 sub-subfamily. Requires Ca(2+) as cofactor. In terms of tissue distribution, expressed by the venom gland.

The protein resides in the secreted. The catalysed reaction is a 1,2-diacyl-sn-glycero-3-phosphocholine + H2O = a 1-acyl-sn-glycero-3-phosphocholine + a fatty acid + H(+). In terms of biological role, PLA2 catalyzes the calcium-dependent hydrolysis of the 2-acyl groups in 3-sn-phosphoglycerides. The polypeptide is Acidic phospholipase A2 (Aipysurus laevis (Olive sea snake)).